The primary structure comprises 348 residues: Elongation factor Ts (348 aa).

Positions 80–83 (TDFV) are involved in Mg(2+) ion dislocation from EF-Tu.

It belongs to the EF-Ts family.

Its subcellular location is the cytoplasm. In terms of biological role, associates with the EF-Tu.GDP complex and induces the exchange of GDP to GTP. It remains bound to the aminoacyl-tRNA.EF-Tu.GTP complex up to the GTP hydrolysis stage on the ribosome. This chain is Elongation factor Ts, found in Streptococcus mutans serotype c (strain ATCC 700610 / UA159).